A 200-amino-acid polypeptide reads, in one-letter code: dITP/XTP pyrophosphatase (200 aa).

7 to 12 (TQNKRK) contacts substrate. Mg(2+) is bound by residues Glu-42 and Asp-71. The Proton acceptor role is filled by Asp-71. Substrate contacts are provided by residues Ser-72, 156 to 159 (FGYD), Lys-179, and 184 to 185 (HR).

This sequence belongs to the HAM1 NTPase family. In terms of assembly, homodimer. It depends on Mg(2+) as a cofactor.

The catalysed reaction is XTP + H2O = XMP + diphosphate + H(+). It carries out the reaction dITP + H2O = dIMP + diphosphate + H(+). The enzyme catalyses ITP + H2O = IMP + diphosphate + H(+). Its function is as follows. Pyrophosphatase that catalyzes the hydrolysis of nucleoside triphosphates to their monophosphate derivatives, with a high preference for the non-canonical purine nucleotides XTP (xanthosine triphosphate), dITP (deoxyinosine triphosphate) and ITP. Seems to function as a house-cleaning enzyme that removes non-canonical purine nucleotides from the nucleotide pool, thus preventing their incorporation into DNA/RNA and avoiding chromosomal lesions. This Malacoplasma penetrans (strain HF-2) (Mycoplasma penetrans) protein is dITP/XTP pyrophosphatase.